Consider the following 433-residue polypeptide: Serine hydroxymethyltransferase (433 aa).

Residue 121–123 participates in (6S)-5,6,7,8-tetrahydrofolate binding; sequence AHV. N6-(pyridoxal phosphate)lysine is present on Lys-227. Glu-243 lines the (6S)-5,6,7,8-tetrahydrofolate pocket.

It belongs to the SHMT family. As to quaternary structure, homodimer. The cofactor is pyridoxal 5'-phosphate.

The protein localises to the cytoplasm. It functions in the pathway amino-acid biosynthesis; glycine biosynthesis; glycine from L-serine: step 1/1. In terms of biological role, catalyzes the reversible interconversion of serine and glycine with a modified folate serving as the one-carbon carrier. Also exhibits a pteridine-independent aldolase activity toward beta-hydroxyamino acids, producing glycine and aldehydes, via a retro-aldol mechanism. The protein is Serine hydroxymethyltransferase of Saccharolobus islandicus (strain Y.N.15.51 / Yellowstone #2) (Sulfolobus islandicus).